Reading from the N-terminus, the 409-residue chain is NADH-quinone oxidoreductase subunit D (409 aa).

This sequence belongs to the complex I 49 kDa subunit family. NDH-1 is composed of 14 different subunits. Subunits NuoB, C, D, E, F, and G constitute the peripheral sector of the complex.

Its subcellular location is the cell inner membrane. The enzyme catalyses a quinone + NADH + 5 H(+)(in) = a quinol + NAD(+) + 4 H(+)(out). In terms of biological role, NDH-1 shuttles electrons from NADH, via FMN and iron-sulfur (Fe-S) centers, to quinones in the respiratory chain. The immediate electron acceptor for the enzyme in this species is believed to be ubiquinone. Couples the redox reaction to proton translocation (for every two electrons transferred, four hydrogen ions are translocated across the cytoplasmic membrane), and thus conserves the redox energy in a proton gradient. The sequence is that of NADH-quinone oxidoreductase subunit D from Helicobacter pylori (strain P12).